The following is a 449-amino-acid chain: Gamma-aminobutyric acid receptor subunit delta (449 aa).

An N-terminal signal peptide occupies residues 1 to 24 (MDVLGWLLLPLLLLCTQPHHGARA). Residues 25 to 251 (MNDIGDYVGS…QLRRNRGVYI (227 aa)) lie on the Extracellular side of the membrane. 2 N-linked (GlcNAc...) asparagine glycosylation sites follow: asparagine 103 and asparagine 106. Cysteines 164 and 178 form a disulfide. A helical membrane pass occupies residues 252 to 271 (IQSYMPSVLLVAMSWVSFWI). At 272-275 (SQAA) the chain is on the cytoplasmic side. Residues 276–298 (VPARVSLGITTVLTMTTLMVSAR) traverse the membrane as a helical segment. Residues 299-308 (SSLPRASAIK) are Extracellular-facing. A helical transmembrane segment spans residues 309-331 (ALDVYFWICYVFVFAALVEYAFA). The Cytoplasmic portion of the chain corresponds to 332–423 (HFNADYRKKR…SRLKPIDADT (92 aa)). Position 390 is a phosphoserine (serine 390). A helical membrane pass occupies residues 424-446 (IDIYARAVFPAAFAAVNIIYWAA). Over 447-449 (YTM) the chain is Extracellular.

The protein belongs to the ligand-gated ion channel (TC 1.A.9) family. Gamma-aminobutyric acid receptor (TC 1.A.9.5) subfamily. GABRD sub-subfamily. As to quaternary structure, heteropentamer, formed by a combination of alpha (GABRA1-6), beta (GABRB1-3), gamma (GABRG1-3), delta (GABRD), epsilon (GABRE), rho (GABRR1-3), pi (GABRP) and theta (GABRQ) chains, each subunit exhibiting distinct physiological and pharmacological properties. Found in the brain, in cerebellar granule cells. Expressed in lungs, in alveolar epithelium.

The protein localises to the cell membrane. It catalyses the reaction chloride(in) = chloride(out). Its function is as follows. Delta subunit of the heteropentameric ligand-gated chloride channel gated by gamma-aminobutyric acid (GABA), a major inhibitory neurotransmitter in the brain. GABA-gated chloride channels, also named GABA(A) receptors (GABAAR), consist of five subunits arranged around a central pore and contain GABA active binding site(s) located at the alpha and beta subunit interface(s). When activated by GABA, GABAARs selectively allow the flow of chloride anions across the cell membrane down their electrochemical gradient. GABAARs containing delta/GABRD subunits are predominantly expressed and located in extrasynaptic or perisynaptic positions on hippocampus and cerebellar granule cells, and contribute to the tonic GABAergic inhibition. GABAAR containing alpha-4-beta-3-delta subunits can simultaneously bind GABA and histamine where histamine binds at the interface of two neighboring beta subunits, which may be involved in the regulation of sleep and wakefulness. The protein is Gamma-aminobutyric acid receptor subunit delta of Rattus norvegicus (Rat).